The following is a 273-amino-acid chain: uncharacterized protein (273 aa).

2 helical membrane-spanning segments follow: residues 24 to 44 (VGVSAIDGLIAAVVAGPVTIL) and 103 to 123 (IVGPWAIGFSLGLSLGGEAWA). The segment at 132–194 (SDLPHHGRQS…QPPAQTQPYR (63 aa)) is disordered. The segment covering 164–179 (SSHHIRSPAVARHHKT) has biased composition (basic residues). Residues 183–192 (TTQPPAQTQP) show a composition bias toward low complexity.

The protein localises to the cell membrane. This is an uncharacterized protein from Sinorhizobium fredii (strain NBRC 101917 / NGR234).